The chain runs to 223 residues: MLFLDKGRIEALRRRLIEWYRVYGDKDLPWRNTADPWAILVAAFLLRKTTARQVVRVYEEFLRRYPNPKALASAREDEVRELIRPLGIEHQRAKHLIELAKHIEARYGGRIPCSKEKLKELPGVGDYIASEVLLAACGSPEPLLDRNMIRILERVLGVKSAKKRPHTDPKMWSTARRIVPKDPDMAKEFNYGMLDLARKICTARKPLCTECPLNDICIYYNND.

Cysteine 201, cysteine 208, cysteine 211, and cysteine 217 together coordinate [4Fe-4S] cluster.

It belongs to the Nth/MutY family. [4Fe-4S] cluster is required as a cofactor.

The enzyme catalyses Hydrolyzes mismatched double-stranded DNA and polynucleotides, releasing free thymine.. Its activity is regulated as follows. Thymine cleavage is completely inhibited by Ni(2+), Co(2+), Zn(2+), Cu(2+) and Mn(2+). Activity is not affected by Mg(2+) and Ca(2+). In terms of biological role, DNA glycosylase that excises thymine from T/G mismatches. Also has a weak DNA glycosylase activity on uracil paired with various bases. This chain is Thymine-DNA glycosylase, found in Aeropyrum pernix (strain ATCC 700893 / DSM 11879 / JCM 9820 / NBRC 100138 / K1).